The chain runs to 228 residues: Urease accessory protein UreE (228 aa).

The disordered stretch occupies residues 193-228 (HGSGLHIHGIHSHGDGHSHSHDDHDHDHNHDHDHKH). A compositionally biased stretch (basic and acidic residues) spans 204–228 (SHGDGHSHSHDDHDHDHNHDHDHKH).

It belongs to the UreE family.

The protein localises to the cytoplasm. Its function is as follows. Involved in urease metallocenter assembly. Binds nickel. Probably functions as a nickel donor during metallocenter assembly. The protein is Urease accessory protein UreE of Yersinia rohdei.